The primary structure comprises 278 residues: Putative ABC transporter ATP-binding protein MTBMA_c05830 (278 aa).

The ABC transporter domain maps to 4–239; it reads IEAVNIRYTY…IDTIRGADLR (236 aa). An ATP-binding site is contributed by 37–44; that stretch reads GPNGAGKS.

The protein belongs to the ABC transporter superfamily.

The protein resides in the cell membrane. Probably part of an ABC transporter complex. Responsible for energy coupling to the transport system. The sequence is that of Putative ABC transporter ATP-binding protein MTBMA_c05830 from Methanothermobacter marburgensis (strain ATCC BAA-927 / DSM 2133 / JCM 14651 / NBRC 100331 / OCM 82 / Marburg) (Methanobacterium thermoautotrophicum).